A 102-amino-acid chain; its full sequence is MASRHISVSEQSRPMLPRHAKLRFDETRQRWVILAPERVLAPDDIAVEILQLCDGARSVAAIIDTLALKYTADRAEIGADVIAMLQDLADKGFLTEAREKTP.

It belongs to the PqqD family. In terms of assembly, monomer. Interacts with PqqE.

It functions in the pathway cofactor biosynthesis; pyrroloquinoline quinone biosynthesis. In terms of biological role, functions as a PqqA binding protein and presents PqqA to PqqE, in the pyrroloquinoline quinone (PQQ) biosynthetic pathway. The protein is PqqA binding protein of Rhodopseudomonas palustris (strain HaA2).